We begin with the raw amino-acid sequence, 314 residues long: TPR repeat-containing protein MJ1345 (314 aa).

9 TPR repeats span residues 12–45 (ESIL…RESP), 46–78 (DVYV…KPKY), 80–112 (LANF…EKSD), 114–146 (PVKY…YPKS), 147–180 (AIAW…NPKD), 182–214 (QSLL…NNKD), 215–248 (IRAL…NPDD), 249–282 (PLLY…NPNI), and 284–313 (DAWN…LDIY).

This chain is TPR repeat-containing protein MJ1345, found in Methanocaldococcus jannaschii (strain ATCC 43067 / DSM 2661 / JAL-1 / JCM 10045 / NBRC 100440) (Methanococcus jannaschii).